Reading from the N-terminus, the 101-residue chain is Large ribosomal subunit protein uL24 (101 aa).

Belongs to the universal ribosomal protein uL24 family. Part of the 50S ribosomal subunit.

In terms of biological role, one of two assembly initiator proteins, it binds directly to the 5'-end of the 23S rRNA, where it nucleates assembly of the 50S subunit. Functionally, one of the proteins that surrounds the polypeptide exit tunnel on the outside of the subunit. The chain is Large ribosomal subunit protein uL24 from Borreliella burgdorferi (strain ATCC 35210 / DSM 4680 / CIP 102532 / B31) (Borrelia burgdorferi).